Reading from the N-terminus, the 403-residue chain is MLRNLVVRNACRNRPSIQVARGLCRHQTRRLMASSPQFGRNSNQEKTAGFIMGILSMAGALYFIAPNRKPLFASRKVESDKTAEEELSSGGEQSPENEDDNNSKSDENGDDNDSKNDETEAGPQLGGDKIGASKVAEDGELVVLAEEDNKSSEDKDTDESKVSTKDDEQSNEDNATANNQKDENISSENSEENTSDKTLDNNAGSSEKKDPEHSDDEKSQQGQSDDKTTTEDNNGEEESSKKTVSDSENSAKQSESSDEEKEELRKQEEKQMGPTEEEVQHEGAYNPDTGEINWDCPCLGGMAHGPCGEEFKSAFSCFVYSEAEPKGIDCVEKFQHMQDCFRKYPEHYAEQLKETSDDEEPQDKVKVNTIESAPNVSSAKENAAKKAEQSDVKKEPLNEESKP.

A mitochondrion-targeting transit peptide spans 1-31 (MLRNLVVRNACRNRPSIQVARGLCRHQTRRL). At 33–46 (ASSPQFGRNSNQEK) the chain is on the mitochondrial matrix side. A helical; Signal-anchor for type II membrane protein membrane pass occupies residues 47-66 (TAGFIMGILSMAGALYFIAP). At 67–403 (NRKPLFASRK…KEPLNEESKP (337 aa)) the chain is on the mitochondrial intermembrane side. Composition is skewed to basic and acidic residues over residues 75 to 84 (RKVESDKTAE), 101 to 118 (NNSKSDENGDDNDSKNDE), 147 to 168 (EDNKSSEDKDTDESKVSTKDDE), 206 to 230 (SEKKDPEHSDDEKSQQGQSDDKTTT), and 262 to 271 (EELRKQEEKQ). The tract at residues 75–292 (RKVESDKTAE…GAYNPDTGEI (218 aa)) is disordered. Disulfide bonds link cysteine 296–cysteine 298, cysteine 307–cysteine 340, and cysteine 317–cysteine 330. Residues 304 to 348 (HGPCGEEFKSAFSCFVYSEAEPKGIDCVEKFQHMQDCFRKYPEHY) enclose the CHCH domain. 2 consecutive short sequence motifs (cx9C motif) follow at residues 307 to 317 (CGEEFKSAFSC) and 330 to 340 (CVEKFQHMQDC). A disordered region spans residues 351 to 403 (QLKETSDDEEPQDKVKVNTIESAPNVSSAKENAAKKAEQSDVKKEPLNEESKP). Over residues 369–378 (TIESAPNVSS) the composition is skewed to polar residues. Residues 382–403 (NAAKKAEQSDVKKEPLNEESKP) are compositionally biased toward basic and acidic residues.

As to quaternary structure, monomer. Interacts with the FAD-linked sulfhydryl oxidase ERV1 and with the substrate proteins COX17, TIM9, and TIM13, forming transient intermolecular disulfide bridges. Interacts with FCJ1. Cu(2+) is required as a cofactor. The cofactor is Zn(2+).

The protein resides in the mitochondrion inner membrane. In terms of biological role, required for the import and folding of small cysteine-containing proteins (small Tim) in the mitochondrial intermembrane space (IMS). Forms a redox cycle with ERV1 that involves a disulfide relay system. Precursor proteins to be imported into the IMS are translocated in their reduced form into the mitochondria. The oxidized form of MIA40 forms a transient intermolecular disulfide bridge with the reduced precursor protein, resulting in oxidation of the precursor protein that now contains an intramolecular disulfide bond and is able to undergo folding in the IMS. Reduced MIA40 is reoxidized by FAD-linked sulfhydryl oxidase ERV1. In Saccharomyces cerevisiae (strain ATCC 204508 / S288c) (Baker's yeast), this protein is Mitochondrial intermembrane space import and assembly protein 40 (MIA40).